We begin with the raw amino-acid sequence, 408 residues long: uncharacterized protein (408 aa).

8 consecutive 4Fe-4S ferredoxin-type domains span residues 42 to 72, 78 to 107, 122 to 151, 151 to 181, 212 to 241, 233 to 265, 273 to 302, and 304 to 333; these read IPPIVKFPEKCISCEGCKESCPAFAIEMIYN, KLPVIDEGSCVACANCIEVCPTGVLEMDKH, SNLIIDEEVCVRCGNCERACPINVIERKEG, GKYVINMALCISCKECIKVCPIENAIVVVDE, KIPHIVSGLCVSCGICKDVCVGEIDLNEKK, GEIDLNEKKVVECVKCGLCIEVCSTTAIRIYKP, ICYVIDEDLCIGCRICQKVCGSGAIKISKE, and KLPYIVPELCVRGGACARECPVGAIKVVKP. C52, C55, C58, C62, C87, C90, C93, C97, C131, C134, C137, C141, C160, C163, C166, and C170 together coordinate [4Fe-4S] cluster. [4Fe-4S] cluster contacts are provided by C282, C285, C288, and C292.

This is an uncharacterized protein from Methanocaldococcus jannaschii (strain ATCC 43067 / DSM 2661 / JAL-1 / JCM 10045 / NBRC 100440) (Methanococcus jannaschii).